Reading from the N-terminus, the 247-residue chain is Carboxy-S-adenosyl-L-methionine synthase (247 aa).

Residues Y39, 64–66 (GCS), 89–90 (DN), 117–118 (DI), N132, and R199 each bind S-adenosyl-L-methionine.

This sequence belongs to the class I-like SAM-binding methyltransferase superfamily. Cx-SAM synthase family. As to quaternary structure, homodimer.

It carries out the reaction prephenate + S-adenosyl-L-methionine = carboxy-S-adenosyl-L-methionine + 3-phenylpyruvate + H2O. In terms of biological role, catalyzes the conversion of S-adenosyl-L-methionine (SAM) to carboxy-S-adenosyl-L-methionine (Cx-SAM). The protein is Carboxy-S-adenosyl-L-methionine synthase of Escherichia coli O7:K1 (strain IAI39 / ExPEC).